Reading from the N-terminus, the 299-residue chain is Sodium/potassium-transporting ATPase subunit beta-2 (299 aa).

The Cytoplasmic segment spans residues 1 to 36 (MAALTQKKTCSQMMEEWKEFMWNPRTREFMGRTGSS). The chain crosses the membrane as a helical; Signal-anchor for type II membrane protein span at residues 37–57 (WALILLFYVVFYAFLTAVFSL). Over 58 to 299 (SLWVMLQTID…VIFTMKIDRL (242 aa)) the chain is Extracellular. N-linked (GlcNAc...) asparagine glycosylation is found at Asn101 and Asn119. Disulfide bonds link Cys130–Cys152 and Cys162–Cys178. N-linked (GlcNAc...) asparagine glycosylation is found at Asn199, Asn226, Asn247, and Asn259. A disulfide bridge connects residues Cys206 and Cys270.

This sequence belongs to the X(+)/potassium ATPases subunit beta family. The sodium/potassium-transporting ATPase is composed of a catalytic alpha subunit, an auxiliary non-catalytic beta subunit and an additional regulatory subunit. Expressed at a high level in bladder epithelial cells and eye and at a trace level in kidney; it is not detectable in significant amounts in the stomach, colon and small intestine.

It is found in the cell membrane. Its function is as follows. This is the non-catalytic component of the active enzyme, which catalyzes the hydrolysis of ATP coupled with the exchange of Na(+) and K(+) ions across the plasma membrane. The exact function of this glycoprotein is not known. Some specific sequence of the beta subunit can modulate the activation of the Na,K-pump by extracellular potassium ions. The polypeptide is Sodium/potassium-transporting ATPase subunit beta-2 (Rhinella marina (Cane toad)).